The sequence spans 387 residues: Eukaryotic translation initiation factor 3 subunit M (387 aa).

The region spanning 181–340 is the PCI domain; that stretch reads LSSKVMIELL…RKVHISSTMH (160 aa).

It belongs to the eIF-3 subunit M family. In terms of assembly, component of the eukaryotic translation initiation factor 3 (eIF-3) complex. The eIF-3 complex interacts with pix.

It is found in the cytoplasm. The protein resides in the golgi apparatus. Component of the eukaryotic translation initiation factor 3 (eIF-3) complex, which is involved in protein synthesis of a specialized repertoire of mRNAs and, together with other initiation factors, stimulates binding of mRNA and methionyl-tRNAi to the 40S ribosome. The eIF-3 complex specifically targets and initiates translation of a subset of mRNAs involved in cell proliferation. This is Eukaryotic translation initiation factor 3 subunit M from Drosophila grimshawi (Hawaiian fruit fly).